Consider the following 208-residue polypeptide: MLKKVIGILVIIAIISVGFFQKEAWLDAIKAGGMFSVLFSMLLIAADVFFPIVPFALIAALNGAVFGTANGIWITLTGSMLGTILLFFLARYSFRDWARKKVQAYPAIQSYEASFNKNAFTAVLLGRLIPVIPSLVMNVICGLSQVRWHVFFFASLIGKIPNIVVVTIAGANFTSNKLLSISIYGTYILIIMLVIYKKFPHLLKVPKK.

6 helical membrane-spanning segments follow: residues 5–25 (VIGI…KEAW), 41–61 (MLLI…IAAL), 69–89 (ANGI…LFFL), 123–143 (VLLG…ICGL), 150–170 (VFFF…TIAG), and 176–196 (NKLL…LVIY).

The protein resides in the cell membrane. This is an uncharacterized protein from Bacillus subtilis (strain 168).